A 685-amino-acid chain; its full sequence is DNA topoisomerase 4 subunit B (685 aa).

Positions 389 to 400 (EAARKAREESRN) are enriched in basic and acidic residues. Residues 389 to 427 (EAARKAREESRNGKKRKKGESLLSGKLTPAQSRNPKKNE) are disordered. Residues 426 to 540 (NELYLVEGDS…AGKVYIALPP (115 aa)) form the Toprim domain. 3 residues coordinate Mg(2+): Glu432, Asp505, and Asp507. Acidic residues-rich tracts occupy residues 644-654 (GSILDRSEEDT) and 673-685 (QTDD…FDIE). A disordered region spans residues 644–685 (GSILDRSEEDTSAPTGESLLDAEKTKEAEQTDDTEISLFDIE).

The protein belongs to the type II topoisomerase family. ParE type 1 subfamily. Heterotetramer composed of ParC and ParE. The cofactor is Mg(2+). Requires Mn(2+) as cofactor. Ca(2+) is required as a cofactor.

It carries out the reaction ATP-dependent breakage, passage and rejoining of double-stranded DNA.. With respect to regulation, pyrrolopyrimidines inhibit both GyrB and its paralog in topoisomerase IV (parE). Its function is as follows. Topoisomerase IV is essential for chromosome segregation. It relaxes supercoiled DNA. Performs the decatenation events required during the replication of a circular DNA molecule. In Enterococcus faecalis (strain ATCC 700802 / V583), this protein is DNA topoisomerase 4 subunit B.